The following is a 163-amino-acid chain: MAENTNNSAVTETEETTAAFTTETNSGAGTGTSTIAPGYGTGRRKEAVARVRLVPGTGEWKINGRTLEEYFPSKLLQREVNSPIVLLKLEGKFDAIVLVDGGGTTGQAGAIRLGVARALNAIDRDANRAALKKAGFLTRDARVVERKKAGLHKARRAPQFSKR.

Low complexity predominate over residues 1 to 25; that stretch reads MAENTNNSAVTETEETTAAFTTETN. The segment at 1-40 is disordered; it reads MAENTNNSAVTETEETTAAFTTETNSGAGTGTSTIAPGYG.

This sequence belongs to the universal ribosomal protein uS9 family.

This Bifidobacterium animalis subsp. lactis (strain AD011) protein is Small ribosomal subunit protein uS9.